We begin with the raw amino-acid sequence, 113 residues long: TYRO protein tyrosine kinase-binding protein (113 aa).

The first 27 residues, 1 to 27 (MGGLEPCSRLLLLPLLLAVGGLRPVQA), serve as a signal peptide directing secretion. At 28-40 (QAQSDCSCSTVSP) the chain is on the extracellular side. A helical membrane pass occupies residues 41–61 (GVLAGIVMGDLVLTVLIALAV). Asp-50 provides a ligand contact to Ca(2+). At 62–113 (YFLGRLVHRGRGAAEAATRKQRITETESPYQELQGQRSDVYSDLNMQRPYYK) the chain is on the cytoplasmic side. Positions 75–113 (AEAATRKQRITETESPYQELQGQRSDVYSDLNMQRPYYK) are disordered. The 29-residue stretch at 80–108 (RKQRITETESPYQELQGQRSDVYSDLNMQ) folds into the ITAM domain. The span at 87–100 (TESPYQELQGQRSD) shows a compositional bias: polar residues. Residues Tyr-91 and Tyr-102 each carry the phosphotyrosine modification.

Belongs to the TYROBP family. Homodimer; disulfide-linked. Homotrimer; disulfide-linked. Homotetramer; disulfide-linked. Homotrimers and homotetramers form when low levels of partner receptors are available and is competitive with assembly with interacting receptors. They may represent alternative oligomerization states or may be intermediates in the receptor assembly process. Binding of a metal cation aids in homooligomerization through coordination of the metal ion by the subunits of the oligomer. Interacts with TREM1. Interacts with TREM2. Interacts with CLECSF5. Interacts with CD300LB and CD300C2. Interacts with CD300E. Interacts (via ITAM domain) with SYK (via SH2 domains); activates SYK mediating neutrophils and macrophages integrin-mediated activation. Interacts with KLRC2. Interacts with CD300H. Interacts with KLRD1. Interacts with SIGLEC1. Following ligand binding by associated receptors, tyrosine phosphorylated in the ITAM domain which leads to activation of additional tyrosine kinases and subsequent cell activation.

Its subcellular location is the cell membrane. Adapter protein which non-covalently associates with activating receptors found on the surface of a variety of immune cells to mediate signaling and cell activation following ligand binding by the receptors. TYROBP is tyrosine-phosphorylated in the ITAM domain following ligand binding by the associated receptors which leads to activation of additional tyrosine kinases and subsequent cell activation. Also has an inhibitory role in some cells. Non-covalently associates with activating receptors of the CD300 family to mediate cell activation. Also mediates cell activation through association with activating receptors of the CD200R family. Required for neutrophil activation mediated by integrin. Required for the activation of myeloid cells mediated by the CLEC5A/MDL1 receptor. Associates with natural killer (NK) cell receptors such as the KLRD1/KLRC2 heterodimer to mediate NK cell activation. Associates with TREM1 to mediate activation of neutrophils and monocytes. Associates with TREM2 on monocyte-derived dendritic cells to mediate up-regulation of chemokine receptor CCR7 and dendritic cell maturation and survival. Association with TREM2 mediates cytokine-induced formation of multinucleated giant cells which are formed by the fusion of macrophages. Stabilizes the TREM2 C-terminal fragment (TREM2-CTF) produced by TREM2 ectodomain shedding which suppresses the release of pro-inflammatory cytokines. In microglia, required with TREM2 for phagocytosis of apoptotic neurons. Required with ITGAM/CD11B in microglia to control production of microglial superoxide ions which promote the neuronal apoptosis that occurs during brain development. Promotes pro-inflammatory responses in microglia following nerve injury which accelerates degeneration of injured neurons. Positively regulates the expression of the IRAK3/IRAK-M kinase and IL10 production by liver dendritic cells and inhibits their T cell allosimulatory ability. Negatively regulates B cell proliferation. Required for CSF1-mediated osteoclast cytoskeletal organization. Positively regulates multinucleation during osteoclast development. This is TYRO protein tyrosine kinase-binding protein from Pan troglodytes (Chimpanzee).